The primary structure comprises 619 residues: Chaperone protein DnaK (619 aa).

At Thr175 the chain carries Phosphothreonine; by autocatalysis. Residues 578–619 are disordered; it reads NGGAQGQGFDPNNMGGANAGAGATNNNDDNVVDADFEVQDDK. A compositionally biased stretch (low complexity) spans 589–606; the sequence is NNMGGANAGAGATNNNDD. The segment covering 607 to 619 has biased composition (acidic residues); sequence NVVDADFEVQDDK.

It belongs to the heat shock protein 70 family.

In terms of biological role, acts as a chaperone. The chain is Chaperone protein DnaK from Clostridium perfringens (strain ATCC 13124 / DSM 756 / JCM 1290 / NCIMB 6125 / NCTC 8237 / Type A).